Reading from the N-terminus, the 736-residue chain is MATAVSYCLLSCIFALLVVSFASAGKDDQDKQVYIVYMGALPSRVDYMPMSHHTSILQDVTGESSIQDRLVRNYKRSFNGFAARLTESEREILASMDEVVSVFPSKNLNLQTTTSWNFMGLKEGKRTKRNPLIESDTIIGVIDSGIYPESDSFSGKGFGPPPKKWKGVCKGGTNFTCNNKLIGARYYTPKLEGFPESARDNTGHGSHTASIAAGNAVKHVSFYGLGNGTVRGGVPAARIAVYKVCDPGVIRCTSDGILAAFDDAIADKVDIITVSLGADAVGTFEEDTLAIGAFHAMAKGILTVNGAGNNGPERRTIVSMAPWLFTVAASNMNRAFITKVVLGNGKTIVGRSVNSFDLNGKKYPLVYGKSASSRCDASSAGFCSPGCLDSKRVKGKIVLCDTQRNPGEAQAMGAVASIVRNPYEDAASVFSFPVSVLSEDDYNIVLSYVNSTKNPKAAVLKSETIFNQKAPVVASYSSRGPNPLIHDILKPDITAPGSEILAAYSPYVPPSESDTRHVKYTVISGTSMSCPHVAGVAAYIKTFHPLWSPSMIQSAIMTTAWPMNASTSPSNELAEFAYGAGHVDPIAAIHPGLVYEANKSDHITFLCGFNYTGKKLRLISGDSSSCTKEQTKSLTRNLNYPSMSAQVSGTKPFKVTFRRTVTNVGRPNATYKAKVVGSKLKVKVVPAVLSLKSLYEKKSFTVTVSGAGPKAENLVSAQLIWSDGVHFVRSPIVVYA.

A signal peptide spans 1 to 24 (MATAVSYCLLSCIFALLVVSFASA). Positions 25–111 (GKDDQDKQVY…VFPSKNLNLQ (87 aa)) are cleaved as a propeptide — activation peptide. The Inhibitor I9 domain occupies 33–110 (VYIVYMGALP…SVFPSKNLNL (78 aa)). Residues 115–589 (SWNFMGLKEG…AGHVDPIAAI (475 aa)) form the Peptidase S8 domain. Asp143 acts as the Charge relay system in catalysis. Asn174 is a glycosylation site (N-linked (GlcNAc...) asparagine). His204 serves as the catalytic Charge relay system. Asn227 carries an N-linked (GlcNAc...) asparagine glycan. Residues 362 to 442 (KYPLVYGKSA…PVSVLSEDDY (81 aa)) form the PA domain. Asn450 is a glycosylation site (N-linked (GlcNAc...) asparagine). Ser527 serves as the catalytic Charge relay system. N-linked (GlcNAc...) asparagine glycans are attached at residues Asn564, Asn598, Asn610, and Asn668.

The protein belongs to the peptidase S8 family. Post-translationally, the C-terminal propeptide is autocleaved.

Its subcellular location is the secreted. This Arabidopsis thaliana (Mouse-ear cress) protein is Subtilisin-like protease SBT4.6.